The chain runs to 138 residues: Large ribosomal subunit protein bL17 (138 aa).

It belongs to the bacterial ribosomal protein bL17 family. Part of the 50S ribosomal subunit. Contacts protein L32.

This is Large ribosomal subunit protein bL17 from Methylorubrum populi (strain ATCC BAA-705 / NCIMB 13946 / BJ001) (Methylobacterium populi).